The following is a 455-amino-acid chain: Yop proteins translocation protein P (455 aa).

Disordered regions lie at residues 38 to 82 (NKGN…QPGR) and 430 to 455 (DFQA…EAEE). Composition is skewed to basic and acidic residues over residues 43-69 (HPKE…DGLR) and 439-449 (QESRQKRHVYE).

This sequence belongs to the SpaN family.

Its subcellular location is the cytoplasm. In terms of biological role, component of the yop secretion machinery. The sequence is that of Yop proteins translocation protein P (yscP) from Yersinia pseudotuberculosis serotype I (strain IP32953).